The following is an 859-amino-acid chain: Heat shock protein 105 kDa (859 aa).

S2 is subject to N-acetylserine. Residue K471 is modified to N6-acetyllysine. Residues S509 and S510 each carry the phosphoserine modification. 2 disordered regions span residues 515–585 (MDCQ…PPEA) and 797–859 (CEPV…MDLD). The span at 533–555 (QQDNNEAGTQPQVQTDGHQTSQS) shows a compositional bias: polar residues. Phosphoserine is present on S558. T562 bears the Phosphothreonine mark. Composition is skewed to basic and acidic residues over residues 564–585 (EENK…PPEA) and 806–815 (PKIESPKLER). S810 carries the post-translational modification Phosphoserine. Residue T816 is modified to Phosphothreonine. Basic and acidic residues predominate over residues 822 to 831 (TDKKEEDLDG). Residues 850–859 (EKSSINMDLD) show a composition bias toward polar residues.

It belongs to the heat shock protein 70 family. Interacts with HSPA8/HSC70. Interacts with HSPA1A (via NBD) and HSPA1B (via NBD). In terms of processing, phosphorylation on Ser-509 may be important for regulation of the HSPA8/HSC70 chaperone activity.

The protein resides in the cytoplasm. Acts as a nucleotide-exchange factor (NEF) for chaperone proteins HSPA1A and HSPA1B, promoting the release of ADP from HSPA1A/B thereby triggering substrate release. Prevents the aggregation of denatured proteins in cells under severe stress, on which the ATP levels decrease markedly. Inhibits HSPA8/HSC70 ATPase and chaperone activities. This chain is Heat shock protein 105 kDa (HSPH1), found in Bos taurus (Bovine).